The sequence spans 888 residues: Patched domain-containing protein 1 (888 aa).

Residues 20–40 traverse the membrane as a helical segment; that stretch reads FIASHPVFFASAPVLISILLG. N-linked (GlcNAc...) asparagine glycosylation is found at Asn77, Asn133, and Asn167. Residues 268-427 form the SSD domain; it reads SERYLVTSLI…LSFYGSSLVF (160 aa). The next 2 helical transmembrane spans lie at 273-293 and 298-318; these read VTSL…QDCV and WLGL…AGII. Asn319 and Asn326 each carry an N-linked (GlcNAc...) asparagine glycan. Helical transmembrane passes span 328-348, 373-393, 407-427, and 502-522; these read TFLG…FEML, LSFS…ASPF, CIAI…SLVF, and PFVV…YLQV. Asn568, Asn599, and Asn608 each carry an N-linked (GlcNAc...) asparagine glycan. A run of 2 helical transmembrane segments spans residues 707 to 727 and 738 to 758; these read ALFL…NVWI and VIGF…LCLI. N-linked (GlcNAc...) asparagine glycosylation occurs at Asn762. Residues 795 to 815 traverse the membrane as a helical segment; that stretch reads GVAILQSYLCYIVGLFPLAAV. Asn818 carries N-linked (GlcNAc...) asparagine glycosylation. The chain crosses the membrane as a helical span at residues 826-846; sequence CLFLIAFVTFFHCFAILPVIL.

Belongs to the patched family. In terms of tissue distribution, broadly expressed in the brain. Selectively expressed in the thalamic reticular nucleus (TRN) in early development and continues to be enriched in this structure throughout adult life.

It localises to the cell membrane. The protein localises to the cell projection. The protein resides in the dendritic spine. Required for the development and function of the thalamic reticular nucleus (TRN), a part of the thalamus that is critical for thalamocortical transmission, generation of sleep rhythms, sensorimotor processing and attention. Can bind cholesterol in vitro. This Mus musculus (Mouse) protein is Patched domain-containing protein 1.